Consider the following 157-residue polypeptide: Small ribosomal subunit protein uS7 (157 aa).

The protein belongs to the universal ribosomal protein uS7 family. As to quaternary structure, part of the 30S ribosomal subunit. Contacts proteins S9 and S11.

One of the primary rRNA binding proteins, it binds directly to 16S rRNA where it nucleates assembly of the head domain of the 30S subunit. Is located at the subunit interface close to the decoding center, probably blocks exit of the E-site tRNA. The protein is Small ribosomal subunit protein uS7 of Blochmanniella floridana.